Here is a 158-residue protein sequence, read N- to C-terminus: Transcriptional repressor NrdR (158 aa).

A zinc finger lies at 3 to 34; that stretch reads CPYCGFEESKVVDSRSTEDHKAIRRRRECLKC. An ATP-cone domain is found at 49–139; the sequence is VLVIKRDSNR…VYRQFKDINT (91 aa).

It belongs to the NrdR family. The cofactor is Zn(2+).

Functionally, negatively regulates transcription of bacterial ribonucleotide reductase nrd genes and operons by binding to NrdR-boxes. The chain is Transcriptional repressor NrdR from Clostridium novyi (strain NT).